The chain runs to 318 residues: Olfactory receptor-like protein COR1 (318 aa).

At 1-26 (MASGNCTTPTTFILSGLTDNPGLQMP) the chain is on the extracellular side. Residue N5 is glycosylated (N-linked (GlcNAc...) asparagine). The helical transmembrane segment at 27 to 49 (LFMVFLAIYTITLLTNLGLIALI) threads the bilayer. Over 50 to 57 (SVDLHLQT) the chain is Cytoplasmic. A helical transmembrane segment spans residues 58–79 (PMYIFLQNLSFTDAAYSTVITP). The Extracellular segment spans residues 80-100 (KMLATFLEERKTISYVGCILQ). Residues C97 and C179 are joined by a disulfide bond. The helical transmembrane segment at 101–120 (YFSFVLLTVTESLLLAVMAY) threads the bilayer. At 121-139 (DRYVAICKPLLYPSIMTKA) the chain is on the cytoplasmic side. A helical transmembrane segment spans residues 140-164 (VCWRLVESLYFLAFLNSLVHTSGLL). The Extracellular portion of the chain corresponds to 165 to 205 (KLSFCYSNVVNHFFCDISPLFQISSSSIAISELLVIISGSL). Residues 206–226 (FVMSSIIIILISYVFIILTVV) form a helical membrane-spanning segment. Residues 227 to 239 (MIRSKDGKYKAFS) lie on the Cytoplasmic side of the membrane. The chain crosses the membrane as a helical span at residues 240-260 (TCTSHLMAVSLFHGTVIFMYL). Residues 261–271 (RPVKLFSLDTD) are Extracellular-facing. Residues 272-292 (KIASLFYTVVIPMLNPLIYSW) form a helical membrane-spanning segment. Residues 293 to 318 (RNKEVKDALRRLTATTFGFIDSKAVQ) lie on the Cytoplasmic side of the membrane.

This sequence belongs to the G-protein coupled receptor 1 family.

The protein resides in the cell membrane. Its function is as follows. Odorant receptor. This chain is Olfactory receptor-like protein COR1 (COR1), found in Gallus gallus (Chicken).